A 411-amino-acid chain; its full sequence is Probable 26S proteasome regulatory subunit rpn-6.2 (411 aa).

The 170-residue stretch at 212–381 (YKTSFSYFYE…DTVVIYPKAG (170 aa)) folds into the PCI domain.

It belongs to the proteasome subunit S9 family. In terms of assembly, component of the lid subcomplex of the 19S proteasome regulatory particle complex (also named PA700 complex). The 26S proteasome consists of a 20S proteasome core and two 19S regulatory subunits.

Functionally, component of the lid subcomplex of the 26S proteasome, a multiprotein complex involved in the ATP-dependent degradation of ubiquitinated proteins. In the complex, rpn-6.2 is required for proteasome assembly. This is Probable 26S proteasome regulatory subunit rpn-6.2 from Caenorhabditis briggsae.